The sequence spans 318 residues: tRNA-cytidine(32) 2-sulfurtransferase (318 aa).

The PP-loop motif motif lies at 65–70 (SGGKDS). [4Fe-4S] cluster contacts are provided by cysteine 140, cysteine 143, and cysteine 231.

This sequence belongs to the TtcA family. As to quaternary structure, homodimer. It depends on Mg(2+) as a cofactor. [4Fe-4S] cluster serves as cofactor.

The protein resides in the cytoplasm. It catalyses the reaction cytidine(32) in tRNA + S-sulfanyl-L-cysteinyl-[cysteine desulfurase] + AH2 + ATP = 2-thiocytidine(32) in tRNA + L-cysteinyl-[cysteine desulfurase] + A + AMP + diphosphate + H(+). It functions in the pathway tRNA modification. Catalyzes the ATP-dependent 2-thiolation of cytidine in position 32 of tRNA, to form 2-thiocytidine (s(2)C32). The sulfur atoms are provided by the cysteine/cysteine desulfurase (IscS) system. This Herminiimonas arsenicoxydans protein is tRNA-cytidine(32) 2-sulfurtransferase.